The sequence spans 463 residues: Argininosuccinate lyase (463 aa).

Belongs to the lyase 1 family. Argininosuccinate lyase subfamily.

The protein resides in the cytoplasm. The catalysed reaction is 2-(N(omega)-L-arginino)succinate = fumarate + L-arginine. It functions in the pathway amino-acid biosynthesis; L-arginine biosynthesis; L-arginine from L-ornithine and carbamoyl phosphate: step 3/3. The protein is Argininosuccinate lyase of Dinoroseobacter shibae (strain DSM 16493 / NCIMB 14021 / DFL 12).